We begin with the raw amino-acid sequence, 157 residues long: 6,7-dimethyl-8-ribityllumazine synthase (157 aa).

5-amino-6-(D-ribitylamino)uracil contacts are provided by residues Phe-22, 57-59 (AYE), and 81-83 (TVI). 86–87 (GT) lines the (2S)-2-hydroxy-3-oxobutyl phosphate pocket. His-89 acts as the Proton donor in catalysis. Phe-114 is a binding site for 5-amino-6-(D-ribitylamino)uracil. (2S)-2-hydroxy-3-oxobutyl phosphate is bound at residue Arg-128.

Belongs to the DMRL synthase family. Forms an icosahedral capsid composed of 60 subunits, arranged as a dodecamer of pentamers.

The catalysed reaction is (2S)-2-hydroxy-3-oxobutyl phosphate + 5-amino-6-(D-ribitylamino)uracil = 6,7-dimethyl-8-(1-D-ribityl)lumazine + phosphate + 2 H2O + H(+). It functions in the pathway cofactor biosynthesis; riboflavin biosynthesis; riboflavin from 2-hydroxy-3-oxobutyl phosphate and 5-amino-6-(D-ribitylamino)uracil: step 1/2. Functionally, catalyzes the formation of 6,7-dimethyl-8-ribityllumazine by condensation of 5-amino-6-(D-ribitylamino)uracil with 3,4-dihydroxy-2-butanone 4-phosphate. This is the penultimate step in the biosynthesis of riboflavin. This Pasteurella multocida (strain Pm70) protein is 6,7-dimethyl-8-ribityllumazine synthase.